We begin with the raw amino-acid sequence, 161 residues long: Small ribosomal subunit protein bS16 (161 aa).

The interval 114–161 is disordered; that stretch reads EGGPTTEATKPKKKSPAKKAKGGEGDADAAAEKVEASAEGEQTESAES. Basic residues predominate over residues 124–133; the sequence is PKKKSPAKKA.

Belongs to the bacterial ribosomal protein bS16 family.

This Mycobacterium marinum (strain ATCC BAA-535 / M) protein is Small ribosomal subunit protein bS16.